The chain runs to 112 residues: Large ribosomal subunit protein P1w (112 aa).

Positions 85-112 (AAAPAAEEKKKDEPAEESDGDLGFGLFD) are disordered. Ser-102 carries the phosphoserine modification.

This sequence belongs to the eukaryotic ribosomal protein P1/P2 family. As to quaternary structure, P1 and P2 exist as dimers at the large ribosomal subunit.

Plays an important role in the elongation step of protein synthesis. This Arabidopsis thaliana (Mouse-ear cress) protein is Large ribosomal subunit protein P1w (RPP1A).